The sequence spans 387 residues: Deoxyguanosinetriphosphate triphosphohydrolase-like protein (387 aa).

The disordered stretch occupies residues 1–26 (MTAPYASDPQRARGRRVKEEESTFRS). Residues 17–26 (VKEEESTFRS) are compositionally biased toward basic and acidic residues. In terms of domain architecture, HD spans 62–198 (RLTHSIEVAQ…AAIADDVAYN (137 aa)).

Belongs to the dGTPase family. Type 2 subfamily.

This is Deoxyguanosinetriphosphate triphosphohydrolase-like protein from Roseobacter denitrificans (strain ATCC 33942 / OCh 114) (Erythrobacter sp. (strain OCh 114)).